Reading from the N-terminus, the 739-residue chain is NAD(P)H-quinone oxidoreductase subunit 5, chloroplastic (739 aa).

The next 16 membrane-spanning stretches (helical) occupy residues 9-29 (WIIPFIPLPVPMLIGAGLILF), 40-60 (WAFQSVLLLSIVMIFSIYLSI), 89-109 (IDPLTSIMSILITTVGIMVLI), 125-145 (FAYMSFFSTSMLGLVTSSNLI), 147-167 (IYIFWELVGLCSYLLIGFWFT), 185-205 (GDFGLLLGILGFYWITGSFEF), 219-239 (NEVNFLFVTLCAVLLFAGAVA), 258-278 (TPISALIHAATMVAAGIFLVA), 286-306 (VIPYIMYLISVIGIITVLLGA), 327-347 (LGYMMLALGMGSYRSALFHLI), 354-374 (ALLFLGSGSIIHSMETIVGYS), 396-416 (ITFLLGTLSLCGIPPLACFWS), 425-445 (WLYSPIFAIIAWATAGLTAFY), 543-563 (LFPIFVLGLFTLFVGAIGIPF), 602-622 (VVSVSIAYFGIFIASFLYKPI), and 717-737 (SYLFLYLAYVSVFLLVYYLLF).

It belongs to the complex I subunit 5 family. NDH is composed of at least 16 different subunits, 5 of which are encoded in the nucleus.

It is found in the plastid. It localises to the chloroplast thylakoid membrane. The catalysed reaction is a plastoquinone + NADH + (n+1) H(+)(in) = a plastoquinol + NAD(+) + n H(+)(out). It catalyses the reaction a plastoquinone + NADPH + (n+1) H(+)(in) = a plastoquinol + NADP(+) + n H(+)(out). Functionally, NDH shuttles electrons from NAD(P)H:plastoquinone, via FMN and iron-sulfur (Fe-S) centers, to quinones in the photosynthetic chain and possibly in a chloroplast respiratory chain. The immediate electron acceptor for the enzyme in this species is believed to be plastoquinone. Couples the redox reaction to proton translocation, and thus conserves the redox energy in a proton gradient. The polypeptide is NAD(P)H-quinone oxidoreductase subunit 5, chloroplastic (ndhF) (Solanum tuberosum (Potato)).